A 183-amino-acid polypeptide reads, in one-letter code: Transcription factor E (183 aa).

The HTH TFE/IIEalpha-type domain maps to Y4–R97.

Belongs to the TFE family. In terms of assembly, monomer. Interaction with RNA polymerase subunits RpoF and RpoE is necessary for Tfe stimulatory transcription activity. Able to interact with Tbp and RNA polymerase in the absence of DNA promoter. Interacts both with the preinitiation and elongation complexes.

Functionally, transcription factor that plays a role in the activation of archaeal genes transcribed by RNA polymerase. Facilitates transcription initiation by enhancing TATA-box recognition by TATA-box-binding protein (Tbp), and transcription factor B (Tfb) and RNA polymerase recruitment. Not absolutely required for transcription in vitro, but particularly important in cases where Tbp or Tfb function is not optimal. It dynamically alters the nucleic acid-binding properties of RNA polymerases by stabilizing the initiation complex and destabilizing elongation complexes. Seems to translocate with the RNA polymerase following initiation and acts by binding to the non template strand of the transcription bubble in elongation complexes. In Caldivirga maquilingensis (strain ATCC 700844 / DSM 13496 / JCM 10307 / IC-167), this protein is Transcription factor E.